The sequence spans 140 residues: Putative nickel-responsive regulator 2 (140 aa).

Ni(2+) contacts are provided by histidine 81, histidine 92, histidine 94, and cysteine 100.

Belongs to the transcriptional regulatory CopG/NikR family. Ni(2+) serves as cofactor.

Its function is as follows. Transcriptional regulator. This Methanosarcina mazei (strain ATCC BAA-159 / DSM 3647 / Goe1 / Go1 / JCM 11833 / OCM 88) (Methanosarcina frisia) protein is Putative nickel-responsive regulator 2.